The following is a 566-amino-acid chain: Serine/threonine-protein kinase PknE (566 aa).

At 1 to 337 the chain is on the cytoplasmic side; sequence MDGTAESREG…PLPRSARQPW (337 aa). The residue at position 7 (serine 7) is a Phosphoserine; by autocatalysis. Threonine 11 is modified (phosphothreonine; by autocatalysis). Residues 16-275 enclose the Protein kinase domain; sequence YRLRRLVGRG…DLSAAAHAAL (260 aa). ATP-binding positions include 22–30 and lysine 45; that span reads VGRGGMGDV. Phosphothreonine; by autocatalysis is present on residues threonine 50 and threonine 59. Aspartate 139 (proton acceptor) is an active-site residue. Residues threonine 170, threonine 175, and threonine 178 each carry the phosphothreonine; by autocatalysis modification. Residues 296 to 330 are disordered; the sequence is PVPSTHPVSPGTRWPQPTPWAGGAPPWGPPSSPLP. The helical transmembrane segment at 338–358 threads the bilayer; that stretch reads LWVGVAVAVVVALAGGLGIAL. Residues 359 to 566 lie on the Extracellular side of the membrane; it reads AHPWRSSGPR…DPSWLARLIG (208 aa).

Belongs to the protein kinase superfamily. Ser/Thr protein kinase family. In terms of assembly, homodimer. In terms of processing, autophosphorylated on serine and threonine residues. Dephosphorylated by PstP.

Its subcellular location is the cell membrane. It catalyses the reaction L-seryl-[protein] + ATP = O-phospho-L-seryl-[protein] + ADP + H(+). It carries out the reaction L-threonyl-[protein] + ATP = O-phospho-L-threonyl-[protein] + ADP + H(+). In terms of biological role, a serine/threonine-protein kinase, acts on HupB in vitro, modifying at least 2 Ser and 8 Thr residues. Important for bacterial survival in the host during infection. The polypeptide is Serine/threonine-protein kinase PknE (Mycobacterium tuberculosis (strain ATCC 25177 / H37Ra)).